The primary structure comprises 503 residues: Plant-specific TFIIB-related protein 1 (503 aa).

The segment at 1–33 adopts a TFIIB-type zinc-finger fold; sequence MKCPYCSSAQGRCTTTSSGRSITECSSCGRVME. Disordered regions lie at residues 328–366, 411–431, 436–455, and 468–503; these read PEKAFPTTTISTTRSTTPRAVDPPEPSFVEKDKPSAKPI, NAMDYEKQQLDKQQQQQLGDK, IYLRDHNPFPSNPSPSTGIS, and GSSSNLPVIHPPKLPPGYAEIRGSGSRNADNPHGDF. Positions 333-346 are enriched in low complexity; it reads PTTTISTTRSTTPR. Positions 355-366 are enriched in basic and acidic residues; the sequence is FVEKDKPSAKPI.

Post-translationally, ubiquinated. Subsequent degradation by the proteasome pathway. As to expression, widely expressed.

It localises to the plastid. It is found in the chloroplast outer membrane. Its subcellular location is the nucleus. Its function is as follows. Plant-specific TFIIB-related protein that may be involved in an intracellular signaling pathway between plastids and the nucleus. May act as general transcription factor (GTF) of RNA polymerase I-dependent transcription and rRNA synthesis. Forms a ternary complex with TBP2 and the rDNA promoter region. This is Plant-specific TFIIB-related protein 1 from Arabidopsis thaliana (Mouse-ear cress).